A 66-amino-acid chain; its full sequence is Large ribosomal subunit protein bL35 (66 aa).

A compositionally biased stretch (basic residues) spans methionine 1 to arginine 16. Residues methionine 1–glycine 20 are disordered.

Belongs to the bacterial ribosomal protein bL35 family.

This chain is Large ribosomal subunit protein bL35, found in Streptococcus uberis (strain ATCC BAA-854 / 0140J).